Here is a 456-residue protein sequence, read N- to C-terminus: Gamma-glutamyl phosphate reductase (456 aa).

At Ser-2 the chain carries N-acetylserine.

The protein belongs to the gamma-glutamyl phosphate reductase family.

The catalysed reaction is L-glutamate 5-semialdehyde + phosphate + NADP(+) = L-glutamyl 5-phosphate + NADPH + H(+). Its pathway is amino-acid biosynthesis; L-proline biosynthesis; L-glutamate 5-semialdehyde from L-glutamate: step 2/2. Catalyzes the NADPH dependent reduction of L-gamma-glutamyl 5-phosphate into L-glutamate 5-semialdehyde and phosphate. The product spontaneously undergoes cyclization to form 1-pyrroline-5-carboxylate. The polypeptide is Gamma-glutamyl phosphate reductase (PRO2) (Saccharomyces cerevisiae (strain ATCC 204508 / S288c) (Baker's yeast)).